We begin with the raw amino-acid sequence, 727 residues long: NADH-ubiquinone oxidoreductase 75 kDa subunit, mitochondrial (727 aa).

Residues 1–23 constitute a mitochondrion transit peptide; the sequence is MLRIPVRKALVGLSKSPKGCVRT. One can recognise a 2Fe-2S ferredoxin-type domain in the interval 30–108; the sequence is NLIEVFVDGQ…GWNILTNSEK (79 aa). The [2Fe-2S] cluster site is built by Cys64, Cys75, and Cys78. Position 84 is an N6-acetyllysine (Lys84). Residue Cys92 coordinates [2Fe-2S] cluster. The region spanning 108–147 is the 4Fe-4S His(Cys)3-ligated-type domain; that stretch reads KSKKAREGVMEFLLANHPLDCPICDQGGECDLQDQSMMFG. His124, Cys128, Cys131, Cys137, Cys176, Cys179, Cys182, and Cys226 together coordinate [4Fe-4S] cluster. Residues 245 to 301 enclose the 4Fe-4S Mo/W bis-MGD-type domain; sequence TRKTESIDVMDAVGSNIVVSTRTGEVMRILPRMHEDINEEWISDKTRFAYDGLKRQR. Residues Lys467, Lys499, and Lys709 each carry the N6-acetyllysine modification.

This sequence belongs to the complex I 75 kDa subunit family. As to quaternary structure, core subunit of respiratory chain NADH dehydrogenase (Complex I) which is composed of 45 different subunits. This is the largest subunit of complex I and it is a component of the iron-sulfur (IP) fragment of the enzyme. Complex I associates with ubiquinol-cytochrome reductase complex (Complex III) to form supercomplexes. Interacts with MDM2 and AKAP1. The cofactor is [2Fe-2S] cluster. [4Fe-4S] cluster serves as cofactor.

It localises to the mitochondrion inner membrane. The enzyme catalyses a ubiquinone + NADH + 5 H(+)(in) = a ubiquinol + NAD(+) + 4 H(+)(out). Core subunit of the mitochondrial membrane respiratory chain NADH dehydrogenase (Complex I) which catalyzes electron transfer from NADH through the respiratory chain, using ubiquinone as an electron acceptor. Essential for catalysing the entry and efficient transfer of electrons within complex I. Plays a key role in the assembly and stability of complex I and participates in the association of complex I with ubiquinol-cytochrome reductase complex (Complex III) to form supercomplexes. This is NADH-ubiquinone oxidoreductase 75 kDa subunit, mitochondrial (NDUFS1) from Macaca fascicularis (Crab-eating macaque).